Here is a 1053-residue protein sequence, read N- to C-terminus: 3-hydroxy-3-methylglutaryl-coenzyme A reductase (1053 aa).

Residues 1–8 (MIYKLAAR) are Cytoplasmic-facing. A helical transmembrane segment spans residues 9–29 (YPIQVIAIVGILVSMAYFSFL). Residues 30 to 203 (EALTQEDFPV…LKIASQASKT (174 aa)) are Lumenal-facing. Asn-137 is a glycosylation site (N-linked (GlcNAc...) asparagine). The helical transmembrane segment at 204–224 (ELLIVGTAYACMLISIVSLYL) threads the bilayer. Positions 204–365 (ELLIVGTAYA…FSFFVAILTL (162 aa)) constitute an SSD domain. The Cytoplasmic segment spans residues 225 to 232 (KMRRLGSK). The helical transmembrane segment at 233–253 (FWLFFSVLLSTLFSVQFAMTL) threads the bilayer. Residues 254 to 258 (VRASG) lie on the Lumenal side of the membrane. Residues 259-279 (VRISLVSLIESLPFLINVVAL) form a helical membrane-spanning segment. Over 280 to 320 (DKAAELTRQVITRCSVSDSHSPMHEDIAKACRNAAPPILRH) the chain is Cytoplasmic. 2 consecutive transmembrane segments (helical) span residues 321–341 (FSFGIVVLAIFSYCNFGIKQF) and 342–362 (FLFAAVMIYDLLLLFSFFVAI). Residues 363–417 (LTLKLEMRRYNAKDDVRKVLIEEGLSESTARHVADGNDSSATTSAGSRYFKVRYG) are Cytoplasmic-facing. Residues 418 to 438 (TKIILFIFIAFNLFELCSIPF) traverse the membrane as a helical segment. Residues 439–526 (KHYAATSAAA…NNWSHYISAS (88 aa)) are Lumenal-facing. The N-linked (GlcNAc...) asparagine glycan is linked to Asn-518. The chain crosses the membrane as a helical span at residues 527–547 (FLSKWIVCALSLSIAVNVFLL). Residues 548–1053 (NAARLNSIKE…KSVNSRVPGR (506 aa)) lie on the Cytoplasmic side of the membrane. The Charge relay system role is filled by Glu-712. 718–724 (STMRGCK) contacts CoA. Residues 779–781 (SRF) and 806–814 (DAMGMNMIS) each bind NADP(+). The active-site Charge relay system is Lys-846. CoA is bound at residue 875-877 (VLK). Asp-922 (charge relay system) is an active-site residue. A CoA-binding site is contributed by 1017 to 1018 (SH). His-1018 functions as the Proton donor in the catalytic mechanism. 1022–1023 (NR) contacts NADP(+). Ser-1024 is subject to Phosphoserine. Residue Thr-1028 is modified to Phosphothreonine. The segment at 1028 to 1053 (TPAMDSSAKKPATDALKSVNSRVPGR) is disordered.

This sequence belongs to the HMG-CoA reductase family.

The protein resides in the endoplasmic reticulum membrane. The protein localises to the nucleus envelope. The catalysed reaction is (R)-mevalonate + 2 NADP(+) + CoA = (3S)-3-hydroxy-3-methylglutaryl-CoA + 2 NADPH + 2 H(+). It participates in metabolic intermediate biosynthesis; (R)-mevalonate biosynthesis; (R)-mevalonate from acetyl-CoA: step 3/3. Functionally, part of the first module of ergosterol biosynthesis pathway that includes the early steps of the pathway, conserved across all eukaryotes, and which results in the formation of mevalonate from acetyl-coenzyme A (acetyl-CoA). Hmg1 catalyzes the reduction of hydroxymethylglutaryl-CoA (HMG-CoA) to mevalonate. The first module starts with the action of the cytosolic acetyl-CoA acetyltransferase eg10 that catalyzes the formation of acetoacetyl-CoA. The hydroxymethylglutaryl-CoA synthases erg13 then condenses acetyl-CoA with acetoacetyl-CoA to form HMG-CoA. The rate-limiting step of the early module is the reduction to mevalonate by the 3-hydroxy-3-methylglutaryl-coenzyme A (HMG-CoA) reductases hcs1. In Schizosaccharomyces pombe (strain 972 / ATCC 24843) (Fission yeast), this protein is 3-hydroxy-3-methylglutaryl-coenzyme A reductase.